We begin with the raw amino-acid sequence, 267 residues long: MKPTILLYDSGMGGLTIYDAIRENLPDAHYLYCFDNAYFPYSEKSEAVLIELAVGIVQKIAENYPLDMVVVACNTASTVVLPALRERFAMPIVGTVPAIKPAAQISQTKTIGLLATKGTVTRPYVDELIERYAKDCVVERIGSTDLVEIVEEKQQTGSVDMRRLQKVVEEWQSHPTLDTVILGCTHFPLVKEELQQLLPRVSFFVDPGNGIANRVVSLLQDVKRNVNNENKENQAFCTQNSENFLKREKVMQNWGFKRLNILNFVEK.

Substrate contacts are provided by residues 9-10 (DS) and 41-42 (YS). Cysteine 73 acts as the Proton donor/acceptor in catalysis. 74-75 (NT) serves as a coordination point for substrate. Residue cysteine 184 is the Proton donor/acceptor of the active site. 185-186 (TH) serves as a coordination point for substrate.

This sequence belongs to the aspartate/glutamate racemases family.

The enzyme catalyses L-glutamate = D-glutamate. The protein operates within cell wall biogenesis; peptidoglycan biosynthesis. Provides the (R)-glutamate required for cell wall biosynthesis. This is Glutamate racemase from Glaesserella parasuis serovar 5 (strain SH0165) (Haemophilus parasuis).